The sequence spans 127 residues: PanD regulatory factor (127 aa).

One can recognise an N-acetyltransferase domain in the interval methionine 1–arginine 127. Residues leucine 66–valine 68 and threonine 72–glutamine 79 each bind CoA.

Belongs to the PanZ/PanM family. As to quaternary structure, interacts with PanD in the presence of CoA. Monomer.

Functionally, controls both the activation and catalytic activity of PanD in a coenzyme A (CoA)-dependent fashion. Binding of CoA or a derivative to PanM leads to interaction with PanD, which promotes the processing and activation of pro-PanD, and subsequent substrate-mediated inhibition of the active form of PanD. Lacks acetyltransferase activity. In Salmonella typhimurium (strain LT2 / SGSC1412 / ATCC 700720), this protein is PanD regulatory factor.